The chain runs to 236 residues: 2-C-methyl-D-erythritol 4-phosphate cytidylyltransferase (236 aa).

This sequence belongs to the IspD/TarI cytidylyltransferase family. IspD subfamily. As to quaternary structure, homodimer.

The catalysed reaction is 2-C-methyl-D-erythritol 4-phosphate + CTP + H(+) = 4-CDP-2-C-methyl-D-erythritol + diphosphate. It participates in isoprenoid biosynthesis; isopentenyl diphosphate biosynthesis via DXP pathway; isopentenyl diphosphate from 1-deoxy-D-xylulose 5-phosphate: step 2/6. In terms of biological role, catalyzes the formation of 4-diphosphocytidyl-2-C-methyl-D-erythritol from CTP and 2-C-methyl-D-erythritol 4-phosphate (MEP). This is 2-C-methyl-D-erythritol 4-phosphate cytidylyltransferase from Enterobacter sp. (strain 638).